A 308-amino-acid polypeptide reads, in one-letter code: MESAKSAAALVEPCQTNSARRLTEDDSLRVSVLSEALPYIQRFSGRRIVIKYGGAAMAHANLQEAVFRDLALLVSVGVEPVVVHGGGPEINQWLERLEIPAQFRDGLRVTDADTMDVVEMVLVGRVNKQIVNGLNQLGAKAVGLSGSDGNLVEARPWGDGSHGFVGDVARVNTDVLEPILAKGYVPVISSVAATVEGCSHNINADTVAGEIAAALEAEKLILLTDTPGILLDRDDPSSLVHQLRLSEARQLITEGVVAGGMTPKTECCIRALAQGVGAAHIIDGRVPHALLLEVFTDAGIGTMVVGRS.

Residues Gly86–Gly87, Arg108, and Asn201 contribute to the substrate site.

It belongs to the acetylglutamate kinase family. ArgB subfamily.

It localises to the cytoplasm. The catalysed reaction is N-acetyl-L-glutamate + ATP = N-acetyl-L-glutamyl 5-phosphate + ADP. The protein operates within amino-acid biosynthesis; L-arginine biosynthesis; N(2)-acetyl-L-ornithine from L-glutamate: step 2/4. Functionally, catalyzes the ATP-dependent phosphorylation of N-acetyl-L-glutamate. The polypeptide is Acetylglutamate kinase (Prochlorococcus marinus (strain MIT 9313)).